Reading from the N-terminus, the 226-residue chain is Fibrillarin-like rRNA/tRNA 2'-O-methyltransferase (226 aa).

S-adenosyl-L-methionine contacts are provided by residues 85 to 86 (TT), 104 to 105 (EF), 129 to 130 (DA), and 149 to 152 (DVAQ).

The protein belongs to the methyltransferase superfamily. Fibrillarin family. As to quaternary structure, interacts with nop5. Component of box C/D small ribonucleoprotein (sRNP) particles that contain rpl7ae, FlpA and nop5, plus a guide RNA.

In terms of biological role, involved in pre-rRNA and tRNA processing. Utilizes the methyl donor S-adenosyl-L-methionine to catalyze the site-specific 2'-hydroxyl methylation of ribose moieties in rRNA and tRNA. Site specificity is provided by a guide RNA that base pairs with the substrate. Methylation occurs at a characteristic distance from the sequence involved in base pairing with the guide RNA. This chain is Fibrillarin-like rRNA/tRNA 2'-O-methyltransferase, found in Thermococcus sibiricus (strain DSM 12597 / MM 739).